Reading from the N-terminus, the 52-residue chain is uncharacterized protein (52 aa).

A disordered region spans residues 1–52 (MFGFIYRDPSPAPQGKIRDGSKDPKTPGGGGGGGGGISPNGGAPLGGKGFSM). Over residues 16 to 25 (KIRDGSKDPK) the composition is skewed to basic and acidic residues. Residues 27–52 (PGGGGGGGGGISPNGGAPLGGKGFSM) show a composition bias toward gly residues.

This is an uncharacterized protein from Dictyostelium discoideum (Social amoeba).